A 579-amino-acid chain; its full sequence is Laccase (579 aa).

The segment at residues 1–31 (MTDWSRRRFLQTGAALGIAGTLPQTTTEVSA) is a signal peptide (tat-type signal). One can recognise a Plastocyanin-like 1 domain in the interval 82-214 (WGFDGSYPGP…AGLLGLYSIT (133 aa)). 4 residues coordinate Cu cation: His-145, His-147, His-192, and His-194. A disordered region spans residues 372 to 401 (VSDPSTPPEDASADPTSLSLPTPASYDESD). A Plastocyanin-like 2 domain is found at 423–530 (LNGHVFGDED…NKMMIPFVVE (108 aa)). Residue Asn-449 is glycosylated (N-linked (GlcNAc...) asparagine). Cu cation contacts are provided by His-455, His-458, His-460, His-512, Cys-513, His-514, His-518, and Met-523. A glycan (N-linked (GlcNAc...) asparagine) is linked at Asn-557.

The protein belongs to the multicopper oxidase family. Cu(2+) serves as cofactor. In terms of processing, exported by the Tat system. Post-translationally, glycosylated.

It is found in the secreted. It catalyses the reaction 4 hydroquinone + O2 = 4 benzosemiquinone + 2 H2O. Inhibited by 1 mM NaN(3), 10 mM thiourea, 10 mM 1,10-phenanthroline, 0.1 mM DL-dithiothreitol (DTT) and 1 mM L-cysteine. The inhibition by DTT and L-cysteine is likely caused by reduction of the oxidized substrate and not by inhibition of the enzyme. Functionally, catalyzes the oxidation of a wide variety of organic substrates, including bilirubin, syringaldazine (SGZ), 2,2'-azino-di-(3-ethylbenzothiazoline)-6-sulfonic acid (ABTS) and dimethoxyphenol (DMP). No oxidation of Fe(2+) or guaiacol. This chain is Laccase (lccA), found in Haloferax volcanii (strain ATCC 29605 / DSM 3757 / JCM 8879 / NBRC 14742 / NCIMB 2012 / VKM B-1768 / DS2) (Halobacterium volcanii).